The chain runs to 283 residues: MTHISTWIDEYHKGSRFGLNGEILIKQNSKYQEIIVIENEYYGRALMLDGCWMTSLKDEKYYHECLVHPALSSIDEKSNVLIIGGGDGGTARECVKYPQISKIDLVEIDEEVIKISKKFLKEIGGEAWSDKRLKIHIDDGVQWVKKTRDNFYDVIFIDCSDPSELSNLLFSDSFYRECKRILTKNGILATQSESPESFKNIHISILKTLKKFFRVSETMYSFVPIYPSGIWSWTFASEEVLHLSKRNCNEALRIEKSCEIWNLNFQNAAFKMMPNKIVKELNS.

The 234-residue stretch at 5-238 folds into the PABS domain; the sequence is STWIDEYHKG…GIWSWTFASE (234 aa). Q32 is an S-methyl-5'-thioadenosine binding site. The spermidine site is built by H63 and D87. S-methyl-5'-thioadenosine contacts are provided by residues E107 and 139 to 140; that span reads DG. The active-site Proton acceptor is D158. 158 to 161 contributes to the spermidine binding site; that stretch reads DCSD.

The protein belongs to the spermidine/spermine synthase family. As to quaternary structure, homodimer or homotetramer.

Its subcellular location is the cytoplasm. It carries out the reaction S-adenosyl 3-(methylsulfanyl)propylamine + putrescine = S-methyl-5'-thioadenosine + spermidine + H(+). The protein operates within amine and polyamine biosynthesis; spermidine biosynthesis; spermidine from putrescine: step 1/1. Functionally, catalyzes the irreversible transfer of a propylamine group from the amino donor S-adenosylmethioninamine (decarboxy-AdoMet) to putrescine (1,4-diaminobutane) to yield spermidine. In Prochlorococcus marinus (strain MIT 9312), this protein is Polyamine aminopropyltransferase.